The chain runs to 379 residues: Queuine tRNA-ribosyltransferase (379 aa).

Asp-91 (proton acceptor) is an active-site residue. Substrate contacts are provided by residues 91–95 (DSGGF), Asp-145, Gln-189, and Gly-216. The tract at residues 247–253 (GVGKPED) is RNA binding. The Nucleophile role is filled by Asp-266. Residues 271-275 (TRNAR) form an RNA binding; important for wobble base 34 recognition region. Zn(2+) contacts are provided by Cys-304, Cys-306, Cys-309, and His-335.

Belongs to the queuine tRNA-ribosyltransferase family. As to quaternary structure, homodimer. Within each dimer, one monomer is responsible for RNA recognition and catalysis, while the other monomer binds to the replacement base PreQ1. Requires Zn(2+) as cofactor.

It carries out the reaction 7-aminomethyl-7-carbaguanine + guanosine(34) in tRNA = 7-aminomethyl-7-carbaguanosine(34) in tRNA + guanine. The protein operates within tRNA modification; tRNA-queuosine biosynthesis. Its function is as follows. Catalyzes the base-exchange of a guanine (G) residue with the queuine precursor 7-aminomethyl-7-deazaguanine (PreQ1) at position 34 (anticodon wobble position) in tRNAs with GU(N) anticodons (tRNA-Asp, -Asn, -His and -Tyr). Catalysis occurs through a double-displacement mechanism. The nucleophile active site attacks the C1' of nucleotide 34 to detach the guanine base from the RNA, forming a covalent enzyme-RNA intermediate. The proton acceptor active site deprotonates the incoming PreQ1, allowing a nucleophilic attack on the C1' of the ribose to form the product. After dissociation, two additional enzymatic reactions on the tRNA convert PreQ1 to queuine (Q), resulting in the hypermodified nucleoside queuosine (7-(((4,5-cis-dihydroxy-2-cyclopenten-1-yl)amino)methyl)-7-deazaguanosine). The sequence is that of Queuine tRNA-ribosyltransferase from Vibrio cholerae serotype O1 (strain ATCC 39315 / El Tor Inaba N16961).